A 102-amino-acid chain; its full sequence is MAKQKIRIRLKAYEHRILDQSADKIVETAKRTGAGISGPIPLPTERTIYTVLRSPHKFKDSREQFEMRTHKRLIDIVNPTPKTVDSLMKLDLPSGVDIEIKL.

The protein belongs to the universal ribosomal protein uS10 family. Part of the 30S ribosomal subunit.

Its function is as follows. Involved in the binding of tRNA to the ribosomes. This Levilactobacillus brevis (strain ATCC 367 / BCRC 12310 / CIP 105137 / JCM 1170 / LMG 11437 / NCIMB 947 / NCTC 947) (Lactobacillus brevis) protein is Small ribosomal subunit protein uS10.